The following is a 508-amino-acid chain: O-acetyltransferase pigM (508 aa).

The tract at residues 166-188 (TPAPDERGKISPSLEDAAGSPRT) is disordered.

The protein operates within secondary metabolite biosynthesis. O-acetyltransferase; part of the gene cluster that mediates the biosynthesis of azaphilone pigments (MonAzPs), a complex mixture of compounds with a common azaphilone skeleton very widely used as food colorants. PigM and pigO are involved in the elimination of the omega-1 alcohol with pigM acting as an O-acetyltransferase that synthesizes the O-11 acetyl intermediate whereas pigO eliminates acetic acid to yield an intermediate with a C10(11) double bond. The first step of the pathway is performed by the nrPKS pigA that forms the hexaketide precursor from successive condensations of five malonyl-CoA units, with a simple acetyl-CoA starter unit. The role of esterase pigG is not clear, but it may play at most a supplementary role in the formation of the benzaldehyde produced by the pigA nrPKS. This very reactive benzaldehyde is intercepted by the pigC ketoreductase that to provide the first stable enzyme-free MonAzPs intermediate, 6-(4-hydroxy-2-oxopentyl)-3-methyl-2,4-dioxocyclohexane carbaldehyde, also known as M7PKS-1. The FAD-dependent monooxygenase pigN hydroxylates M7PKS-1 at C-4, which triggers the formation of the pyran ring. PigJ, pigK and pigD are involved in the acetylation of the pyran ring. PigJ and pigK form the two subunits of a dedicated fungal FAS that produces the side chain fatty acyl moiety of MonAzPs and pigD transfers the fatty acyl chain to the C-4 alcohol. PigM and pigO are involved in the elimination of the omega-1 alcohol. PigM acts as an O-acetyltransferase that synthesizes the putative O-11 acetyl intermediate whereas pigO eliminates acetic acid to yield an intermediate with a C10(11) double bond. The dehydration of the C-11 alcohol followed by the reduction of the C6(7) double bond by the NAD(P)H-dependent oxidoreductase pigE increases the electrophilicity of the C-5 ketone of the resulting acyl benzopyran. This in turn sets up the C-5 ketone for an intramolecular Knoevenagel aldol condensation with the C-20 enol of the side chain. This condensation affords the characteristic linear tricyclic carbon skeletons of the yellow pigments that serve as the common precursors for the classical yellow pigments monascin and ankaflavin, orange pigments rubopunctatin and monascorubrin, and red pigments ribropunctamine and monascorubramine. The FAD-dependent oxidoreductase pigF is especially invoved in the biosynthesis of orange and red pigments via desaturation of C6(7). This Monascus ruber (Mold) protein is O-acetyltransferase pigM.